A 436-amino-acid chain; its full sequence is Histidinol dehydrogenase (436 aa).

3 residues coordinate substrate: serine 237, glutamine 259, and histidine 262. Zn(2+) contacts are provided by glutamine 259 and histidine 262. Catalysis depends on proton acceptor residues glutamate 327 and histidine 328. Positions 328, 361, 415, and 420 each coordinate substrate. Aspartate 361 is a binding site for Zn(2+). Histidine 420 is a binding site for Zn(2+).

It belongs to the histidinol dehydrogenase family. The cofactor is Zn(2+).

The catalysed reaction is L-histidinol + 2 NAD(+) + H2O = L-histidine + 2 NADH + 3 H(+). Its pathway is amino-acid biosynthesis; L-histidine biosynthesis; L-histidine from 5-phospho-alpha-D-ribose 1-diphosphate: step 9/9. Functionally, catalyzes the sequential NAD-dependent oxidations of L-histidinol to L-histidinaldehyde and then to L-histidine. In Helicobacter hepaticus (strain ATCC 51449 / 3B1), this protein is Histidinol dehydrogenase.